We begin with the raw amino-acid sequence, 663 residues long: Oxytetracycline resistance protein (663 aa).

Positions 1–252 constitute a tr-type G domain; the sequence is MNKLNLGILA…GIRELLPSVH (252 aa). Residues 10 to 17, 74 to 78, and 128 to 131 each bind GTP; these read AHVDAGKT, DTPGH, and NKID.

It belongs to the TRAFAC class translation factor GTPase superfamily. Classic translation factor GTPase family. TetM/TetO subfamily.

Its function is as follows. Abolishes the inhibitory effect of oxytetracycline on protein synthesis by a non-covalent modification of the ribosomes. The polypeptide is Oxytetracycline resistance protein (otrA) (Streptomyces rimosus).